A 389-amino-acid polypeptide reads, in one-letter code: Tubulin-like protein CetZ3 (389 aa).

Residues 10–14 (QAGGK), 110–112 (GTG), E142, N169, and N187 each bind GTP.

This sequence belongs to the CetZ family.

It is found in the cytoplasm. Involved in cell shape control. The sequence is that of Tubulin-like protein CetZ3 from Haloferax volcanii (strain ATCC 29605 / DSM 3757 / JCM 8879 / NBRC 14742 / NCIMB 2012 / VKM B-1768 / DS2) (Halobacterium volcanii).